The sequence spans 423 residues: Probable multifunctional protein ADE2 (423 aa).

The SAICAR synthetase stretch occupies residues 1–263 (MSSLAEIASR…KVMDITATFS (263 aa)). Positions 264–423 (KHQQKCHVLV…NIYNANRKLE (160 aa)) are AIR carboxylase.

The protein in the N-terminal section; belongs to the SAICAR synthetase family. In the C-terminal section; belongs to the AIR carboxylase family. Class II subfamily.

The catalysed reaction is 5-amino-1-(5-phospho-D-ribosyl)imidazole-4-carboxylate + L-aspartate + ATP = (2S)-2-[5-amino-1-(5-phospho-beta-D-ribosyl)imidazole-4-carboxamido]succinate + ADP + phosphate + 2 H(+). It carries out the reaction 5-amino-1-(5-phospho-D-ribosyl)imidazole-4-carboxylate + H(+) = 5-amino-1-(5-phospho-beta-D-ribosyl)imidazole + CO2. It functions in the pathway purine metabolism; IMP biosynthesis via de novo pathway; 5-amino-1-(5-phospho-D-ribosyl)imidazole-4-carboxamide from 5-amino-1-(5-phospho-D-ribosyl)imidazole-4-carboxylate: step 1/2. Its pathway is purine metabolism; IMP biosynthesis via de novo pathway; 5-amino-1-(5-phospho-D-ribosyl)imidazole-4-carboxylate from 5-amino-1-(5-phospho-D-ribosyl)imidazole (carboxylase route): step 1/1. The chain is Probable multifunctional protein ADE2 from Caenorhabditis elegans.